Consider the following 358-residue polypeptide: E3 ubiquitin-protein ligase RNF146 (358 aa).

The RING-type zinc finger occupies 36 to 74 (CAICLQTCVHPVSLPCKHVFCYLCVKGASWLGKRCALCR). Residues lysine 84 and lysine 94 each participate in a glycyl lysine isopeptide (Lys-Gly) (interchain with G-Cter in ubiquitin) cross-link. The 77-residue stretch at 91-167 (EELKAASRGN…EHGRRRKIKR (77 aa)) folds into the WWE domain. The a glycoprotein site is built by tyrosine 107, arginine 110, and tryptophan 114. Lysine 130 is covalently cross-linked (Glycyl lysine isopeptide (Lys-Gly) (interchain with G-Cter in ubiquitin)). A glycoprotein-binding residues include tyrosine 144, glutamine 153, arginine 163, and lysine 175. Lysine 175 participates in a covalent cross-link: Glycyl lysine isopeptide (Lys-Gly) (interchain with G-Cter in ubiquitin). Residues 253–358 (GDNTAERSHR…PDGQCTVTEV (106 aa)) form a disordered region. A compositionally biased stretch (acidic residues) spans 283 to 297 (SIEETESDASSDSED). Phosphoserine occurs at positions 289 and 293. Polar residues predominate over residues 305-322 (HSLTQQRLLVSNANQTVP).

Can form homooligomers. Interacts with PARsylated AXIN1, AXIN2, BLZF1, CASC3, H1-2, IPO7, LIG3, NCL, PARP1, XRCC1, XRCC5 and XRCC6. Interacts with DDB1, DHX15, IQGAP1, LRPPRC, PARP2, PRKDC, RUVBL2, TNKS1 and TNKS2. Binding often leads to interactor ubiquitination, in the presence of the appropriate E1 and E2 enzymes, and proteasomal degradation. Ubiquitinated; autoubiquitinated. Autoubiquitination is enhanced upon poly(ADP-ribose)-binding.

The protein resides in the cytoplasm. It is found in the cytosol. It localises to the nucleus. The enzyme catalyses S-ubiquitinyl-[E2 ubiquitin-conjugating enzyme]-L-cysteine + [acceptor protein]-L-lysine = [E2 ubiquitin-conjugating enzyme]-L-cysteine + N(6)-ubiquitinyl-[acceptor protein]-L-lysine.. Its pathway is protein modification; protein ubiquitination. In terms of biological role, E3 ubiquitin-protein ligase that specifically binds poly-ADP-ribosylated (PARsylated) proteins and mediates their ubiquitination and subsequent degradation. May regulate many important biological processes, such as cell survival and DNA damage response. Acts as an activator of the Wnt signaling pathway by mediating the ubiquitination of PARsylated AXIN1 and AXIN2, 2 key components of the beta-catenin destruction complex. Acts in cooperation with tankyrase proteins (TNKS and TNKS2), which mediate PARsylation of target proteins AXIN1, AXIN2, BLZF1, CASC3, TNKS and TNKS2. Recognizes and binds tankyrase-dependent PARsylated proteins via its WWE domain and mediates their ubiquitination, leading to their degradation. Different ubiquitin linkage types have been observed: TNKS2 undergoes ubiquitination at 'Lys-48' and 'Lys-63', while AXIN1 is only ubiquitinated at 'Lys-48'. May regulate TNKS and TNKS2 subcellular location, preventing aggregation at a centrosomal location. Neuroprotective protein. Protects the brain against N-methyl-D-aspartate (NMDA) receptor-mediated glutamate excitotoxicity and ischemia, by interfering with PAR-induced cell death, called parthanatos. Prevents nuclear translocation of AIFM1 in a PAR-binding dependent manner. Does not affect PARP1 activation. Protects against cell death induced by DNA damaging agents, such as N-methyl-N-nitro-N-nitrosoguanidine (MNNG) and rescues cells from G1 arrest. Promotes cell survival after gamma-irradiation. Facilitates DNA repair. The protein is E3 ubiquitin-protein ligase RNF146 (RNF146) of Pongo abelii (Sumatran orangutan).